Reading from the N-terminus, the 152-residue chain is Ribosomal RNA large subunit methyltransferase H (152 aa).

Residues leucine 68, glycine 100, and phenylalanine 119 to tryptophan 124 each bind S-adenosyl-L-methionine.

It belongs to the RNA methyltransferase RlmH family. As to quaternary structure, homodimer.

It is found in the cytoplasm. It carries out the reaction pseudouridine(1915) in 23S rRNA + S-adenosyl-L-methionine = N(3)-methylpseudouridine(1915) in 23S rRNA + S-adenosyl-L-homocysteine + H(+). Specifically methylates the pseudouridine at position 1915 (m3Psi1915) in 23S rRNA. The chain is Ribosomal RNA large subunit methyltransferase H from Rhodospirillum centenum (strain ATCC 51521 / SW).